We begin with the raw amino-acid sequence, 163 residues long: Crossover junction endodeoxyribonuclease RuvC (163 aa).

Catalysis depends on residues Asp-9, Glu-76, and Asp-148. Mg(2+) is bound by residues Asp-9, Glu-76, and Asp-148.

It belongs to the RuvC family. Homodimer which binds Holliday junction (HJ) DNA. The HJ becomes 2-fold symmetrical on binding to RuvC with unstacked arms; it has a different conformation from HJ DNA in complex with RuvA. In the full resolvosome a probable DNA-RuvA(4)-RuvB(12)-RuvC(2) complex forms which resolves the HJ. Requires Mg(2+) as cofactor.

It localises to the cytoplasm. It carries out the reaction Endonucleolytic cleavage at a junction such as a reciprocal single-stranded crossover between two homologous DNA duplexes (Holliday junction).. The RuvA-RuvB-RuvC complex processes Holliday junction (HJ) DNA during genetic recombination and DNA repair. Endonuclease that resolves HJ intermediates. Cleaves cruciform DNA by making single-stranded nicks across the HJ at symmetrical positions within the homologous arms, yielding a 5'-phosphate and a 3'-hydroxyl group; requires a central core of homology in the junction. The consensus cleavage sequence is 5'-(A/T)TT(C/G)-3'. Cleavage occurs on the 3'-side of the TT dinucleotide at the point of strand exchange. HJ branch migration catalyzed by RuvA-RuvB allows RuvC to scan DNA until it finds its consensus sequence, where it cleaves and resolves the cruciform DNA. The polypeptide is Crossover junction endodeoxyribonuclease RuvC (Nostoc sp. (strain PCC 7120 / SAG 25.82 / UTEX 2576)).